The primary structure comprises 142 residues: Large ribosomal subunit protein uL11 (142 aa).

This sequence belongs to the universal ribosomal protein uL11 family. Part of the ribosomal stalk of the 50S ribosomal subunit. Interacts with L10 and the large rRNA to form the base of the stalk. L10 forms an elongated spine to which L12 dimers bind in a sequential fashion forming a multimeric L10(L12)X complex. In terms of processing, one or more lysine residues are methylated.

Functionally, forms part of the ribosomal stalk which helps the ribosome interact with GTP-bound translation factors. This is Large ribosomal subunit protein uL11 from Pasteurella multocida (strain Pm70).